The following is a 1086-amino-acid chain: Selenocysteine insertion sequence-binding protein 2-like (1086 aa).

5 disordered regions span residues 155–207 (GQAF…GPDS), 243–386 (AKGR…SESL), 615–657 (QEDA…SPMA), 880–904 (SDGLEPSEMEKAAPCTHSPPEKPSR), and 919–1086 (AAGS…PQST). Polar residues predominate over residues 193-206 (NVATQKETSATGPD). Serine 276 is modified (phosphoserine). 2 stretches are compositionally biased toward polar residues: residues 294 to 303 (GTMNRLESSG) and 328 to 344 (QAFSRGGRQTEQRNNLQ). Residues 355-370 (SSERRQNLQKRQDNKH) show a composition bias toward basic and acidic residues. Residues 624 to 657 (SDASLSPASQNSPYCMTPVSQGSPASSGIGSPMA) are compositionally biased toward polar residues. The segment covering 922–931 (SITSAPSQGK) has biased composition (polar residues). Residues 933 to 943 (TGDKDELKPDD) show a composition bias toward basic and acidic residues. Over residues 947 to 957 (ASQQSTETGSL) the composition is skewed to polar residues. Positions 981–994 (LEEEEDEEEEEEDY) are enriched in acidic residues. The segment covering 1004 to 1022 (QLNSRIESWVSETQRTMET) has biased composition (polar residues). The span at 1032–1046 (SEEDSAEQSGEEAAE) shows a compositional bias: acidic residues.

Functionally, binds SECIS (Sec insertion sequence) elements present on selenocysteine (Sec) protein mRNAs, but does not promote Sec incorporation into selenoproteins. This Mus musculus (Mouse) protein is Selenocysteine insertion sequence-binding protein 2-like (Secisbp2l).